A 449-amino-acid polypeptide reads, in one-letter code: NADH-quinone oxidoreductase subunit D (449 aa).

This sequence belongs to the complex I 49 kDa subunit family. As to quaternary structure, NDH-1 is composed of 14 different subunits. Subunits NuoB, C, D, E, F, and G constitute the peripheral sector of the complex.

Its subcellular location is the cell membrane. It catalyses the reaction a quinone + NADH + 5 H(+)(in) = a quinol + NAD(+) + 4 H(+)(out). NDH-1 shuttles electrons from NADH, via FMN and iron-sulfur (Fe-S) centers, to quinones in the respiratory chain. The immediate electron acceptor for the enzyme in this species is believed to be a menaquinone. Couples the redox reaction to proton translocation (for every two electrons transferred, four hydrogen ions are translocated across the cytoplasmic membrane), and thus conserves the redox energy in a proton gradient. The chain is NADH-quinone oxidoreductase subunit D from Saccharopolyspora erythraea (strain ATCC 11635 / DSM 40517 / JCM 4748 / NBRC 13426 / NCIMB 8594 / NRRL 2338).